The following is a 61-amino-acid chain: Small ribosomal subunit protein bS21 (61 aa).

The disordered stretch occupies residues 36–61 (EHYESPSVKRKKKAEAARKRKYKYGR). Over residues 43-61 (VKRKKKAEAARKRKYKYGR) the composition is skewed to basic residues.

This sequence belongs to the bacterial ribosomal protein bS21 family.

This Caldanaerobacter subterraneus subsp. tengcongensis (strain DSM 15242 / JCM 11007 / NBRC 100824 / MB4) (Thermoanaerobacter tengcongensis) protein is Small ribosomal subunit protein bS21 (rpsU).